A 116-amino-acid chain; its full sequence is Large ribosomal subunit protein uL14m (116 aa).

This sequence belongs to the universal ribosomal protein uL14 family.

The protein localises to the mitochondrion. In Acanthamoeba polyphaga (Amoeba), this protein is Large ribosomal subunit protein uL14m (RPL14).